A 313-amino-acid chain; its full sequence is T-box protein 37 (313 aa).

Positions 19 to 195 form a DNA-binding region, T-box; the sequence is IWEKFYPKTE…HNKFASGFRS (177 aa). A disordered region spans residues 193-228; sequence FRSNGKRRLSSESENSENSPPKRSASAISSLTPPAI.

It localises to the nucleus. Functionally, transcription factor. Required for mesodermal induction, acting redundantly with transcription factor tbx-38. Together with tbx-38, acts by inducing cell fates in the AB lineage, thereby playing a role in development of the anterior pharynx. The protein is T-box protein 37 (tbx-37) of Caenorhabditis elegans.